A 348-amino-acid chain; its full sequence is A-type ATP synthase subunit C (348 aa).

Belongs to the V-ATPase V0D/AC39 subunit family. As to quaternary structure, has multiple subunits with at least A(3), B(3), C, D, E, F, H, I and proteolipid K(x).

Its subcellular location is the cell membrane. Its function is as follows. Component of the A-type ATP synthase that produces ATP from ADP in the presence of a proton gradient across the membrane. In Haloferax volcanii (strain ATCC 29605 / DSM 3757 / JCM 8879 / NBRC 14742 / NCIMB 2012 / VKM B-1768 / DS2) (Halobacterium volcanii), this protein is A-type ATP synthase subunit C.